The following is a 282-amino-acid chain: Undecaprenyl-diphosphatase (282 aa).

Transmembrane regions (helical) follow at residues 90-110 (YRLGWYVIIGTIPICVMGLLF), 121-141 (LWVVATALVVFSGVIALAEYL), 165-185 (LALVPGVSRSGSTISAGLFLG), 194-214 (FGFLLAIPAVFASGLFSLPDA), 228-248 (QLLVATLIAFVVGLAAVSWFL), and 256-276 (MYWFVGYRVVVGVVVLILLAT).

The protein belongs to the UppP family.

Its subcellular location is the cell membrane. The enzyme catalyses di-trans,octa-cis-undecaprenyl diphosphate + H2O = di-trans,octa-cis-undecaprenyl phosphate + phosphate + H(+). In terms of biological role, catalyzes the dephosphorylation of undecaprenyl diphosphate (UPP). Confers resistance to bacitracin. The sequence is that of Undecaprenyl-diphosphatase from Mycobacterium marinum (strain ATCC BAA-535 / M).